Here is a 101-residue protein sequence, read N- to C-terminus: NAD(P)H-quinone oxidoreductase subunit 4L, chloroplastic (101 aa).

Helical transmembrane passes span Met-2–Ile-22, Met-32–Phe-52, and Ile-61–Val-81.

The protein belongs to the complex I subunit 4L family. As to quaternary structure, NDH is composed of at least 16 different subunits, 5 of which are encoded in the nucleus.

The protein resides in the plastid. It is found in the chloroplast thylakoid membrane. It carries out the reaction a plastoquinone + NADH + (n+1) H(+)(in) = a plastoquinol + NAD(+) + n H(+)(out). The enzyme catalyses a plastoquinone + NADPH + (n+1) H(+)(in) = a plastoquinol + NADP(+) + n H(+)(out). Its function is as follows. NDH shuttles electrons from NAD(P)H:plastoquinone, via FMN and iron-sulfur (Fe-S) centers, to quinones in the photosynthetic chain and possibly in a chloroplast respiratory chain. The immediate electron acceptor for the enzyme in this species is believed to be plastoquinone. Couples the redox reaction to proton translocation, and thus conserves the redox energy in a proton gradient. This chain is NAD(P)H-quinone oxidoreductase subunit 4L, chloroplastic, found in Acorus calamus var. americanus (American sweet flag).